A 205-amino-acid polypeptide reads, in one-letter code: GTP cyclohydrolase-2 (205 aa).

A GTP-binding site is contributed by 49 to 53 (RLHSE). Zn(2+) contacts are provided by Cys-54, Cys-65, and Cys-67. Residues Gln-70, 92–94 (EGR), and Thr-114 each bind GTP. Asp-126 (proton acceptor) is an active-site residue. The active-site Nucleophile is the Arg-128. GTP contacts are provided by Thr-149 and Lys-154.

The protein belongs to the GTP cyclohydrolase II family. It depends on Zn(2+) as a cofactor.

The catalysed reaction is GTP + 4 H2O = 2,5-diamino-6-hydroxy-4-(5-phosphoribosylamino)-pyrimidine + formate + 2 phosphate + 3 H(+). It participates in cofactor biosynthesis; riboflavin biosynthesis; 5-amino-6-(D-ribitylamino)uracil from GTP: step 1/4. Functionally, catalyzes the conversion of GTP to 2,5-diamino-6-ribosylamino-4(3H)-pyrimidinone 5'-phosphate (DARP), formate and pyrophosphate. In Pseudomonas putida (strain ATCC 700007 / DSM 6899 / JCM 31910 / BCRC 17059 / LMG 24140 / F1), this protein is GTP cyclohydrolase-2.